The sequence spans 61 residues: Temporin-CG3 (61 aa).

The first 22 residues, 1–22, serve as a signal peptide directing secretion; that stretch reads MFTMKKPLLLLFFLATINLSLC. Residues 23–44 constitute a propeptide, removed in mature form; that stretch reads EQERNAEEERRDEPDERNAEVE.

It belongs to the frog skin active peptide (FSAP) family. Temporin subfamily. In terms of tissue distribution, expressed by the skin glands.

Its subcellular location is the secreted. Functionally, antimicrobial peptide active against a variety of Gram-positive bacterial strains but not against Gram-negative bacteria. Has weak antifungal activity against a slime mold isolate. Has weak hemolytic activity against human erythrocytes. This Amolops chunganensis (Chungan torrent frog) protein is Temporin-CG3.